The sequence spans 339 residues: DNA-directed RNA polymerase subunit alpha (339 aa).

Positions 1–233 (MVREEITGST…DLFLPFIHTE (233 aa)) are alpha N-terminal domain (alpha-NTD). Residues 266–339 (GIPLNCIFID…IDLPKNKFSL (74 aa)) are alpha C-terminal domain (alpha-CTD).

Belongs to the RNA polymerase alpha chain family. In plastids the minimal PEP RNA polymerase catalytic core is composed of four subunits: alpha, beta, beta', and beta''. When a (nuclear-encoded) sigma factor is associated with the core the holoenzyme is formed, which can initiate transcription.

It localises to the plastid. Its subcellular location is the chloroplast. It carries out the reaction RNA(n) + a ribonucleoside 5'-triphosphate = RNA(n+1) + diphosphate. Functionally, DNA-dependent RNA polymerase catalyzes the transcription of DNA into RNA using the four ribonucleoside triphosphates as substrates. The chain is DNA-directed RNA polymerase subunit alpha from Saccharum hybrid (Sugarcane).